A 126-amino-acid polypeptide reads, in one-letter code: Fluoride-specific ion channel FluC (126 aa).

The next 4 helical transmembrane spans lie at 6 to 26 (FVAV…FSVL), 36 to 56 (YGTL…VGFF), 69 to 89 (LAIT…SEVV), and 99 to 119 (WAAM…ALGL). Positions 76 and 79 each coordinate Na(+).

Belongs to the fluoride channel Fluc/FEX (TC 1.A.43) family.

It localises to the cell inner membrane. The catalysed reaction is fluoride(in) = fluoride(out). With respect to regulation, na(+) is not transported, but it plays an essential structural role and its presence is essential for fluoride channel function. In terms of biological role, fluoride-specific ion channel. Important for reducing fluoride concentration in the cell, thus reducing its toxicity. This Cupriavidus taiwanensis (strain DSM 17343 / BCRC 17206 / CCUG 44338 / CIP 107171 / LMG 19424 / R1) (Ralstonia taiwanensis (strain LMG 19424)) protein is Fluoride-specific ion channel FluC.